The following is a 129-amino-acid chain: Glycine cleavage system H protein (129 aa).

In terms of domain architecture, Lipoyl-binding spans 24–106 (SYTVGISEHA…FGDGWFFRVM (83 aa)). At K65 the chain carries N6-lipoyllysine.

Belongs to the GcvH family. As to quaternary structure, the glycine cleavage system is composed of four proteins: P, T, L and H. Requires (R)-lipoate as cofactor.

In terms of biological role, the glycine cleavage system catalyzes the degradation of glycine. The H protein shuttles the methylamine group of glycine from the P protein to the T protein. This chain is Glycine cleavage system H protein, found in Shewanella sediminis (strain HAW-EB3).